Here is a 150-residue protein sequence, read N- to C-terminus: Macrodomain Ter protein (150 aa).

This sequence belongs to the MatP family. Homodimer.

It localises to the cytoplasm. Its function is as follows. Required for spatial organization of the terminus region of the chromosome (Ter macrodomain) during the cell cycle. Prevents early segregation of duplicated Ter macrodomains during cell division. Binds specifically to matS, which is a 13 bp signature motif repeated within the Ter macrodomain. This is Macrodomain Ter protein from Escherichia coli (strain SMS-3-5 / SECEC).